The sequence spans 704 residues: Polyribonucleotide nucleotidyltransferase (704 aa).

Positions 490 and 496 each coordinate Mg(2+). Positions 557-616 (PKIEMIQIKPAKIKDVIGKGGETINSIIDETGVKIDIDQDGNVSIASSDAEMIKKAIKII) constitute a KH domain. In terms of domain architecture, S1 motif spans 626 to 694 (GQVYLAKVVR…KQGRVNVSRK (69 aa)).

It belongs to the polyribonucleotide nucleotidyltransferase family. Mg(2+) serves as cofactor.

It is found in the cytoplasm. It catalyses the reaction RNA(n+1) + phosphate = RNA(n) + a ribonucleoside 5'-diphosphate. Its function is as follows. Involved in mRNA degradation. Catalyzes the phosphorolysis of single-stranded polyribonucleotides processively in the 3'- to 5'-direction. This Enterococcus faecalis (strain ATCC 700802 / V583) protein is Polyribonucleotide nucleotidyltransferase.